A 302-amino-acid polypeptide reads, in one-letter code: MSIKHFLTLQDFSPAELKQLMLRAIELKKIQKSGEIFEPLKNKTLAMIFEKSSTRTRISFEIGMSQLGGHALFLSPRDTQLGRGEPIEDTAKVISSMADGIMIRTFGHEVVEKMAEHSQVPVINALTDDYHPCQLLADMQTYYEHRGSIEGKTVLWVGDGNNMCHSYINAAKQYGFKLRISAPEDYDPNPRIVEANQEYVEMIRNPMDAAENVDLIVTDVWASMGQEEEQKKREKAFKDYQVNTAMMQQANPDALFMHCLPAHRGEEVSAEVMDAEDSVVWDEAENRLHAQKALLEYLMAKA.

Residues 53–56 (STRT), Gln80, Arg104, and 131–134 (HPCQ) each bind carbamoyl phosphate. L-ornithine is bound by residues Asn162, Asp219, and 223–224 (SM). Carbamoyl phosphate is bound by residues 259–260 (CL) and Arg287.

It belongs to the aspartate/ornithine carbamoyltransferase superfamily. OTCase family.

It is found in the cytoplasm. It catalyses the reaction carbamoyl phosphate + L-ornithine = L-citrulline + phosphate + H(+). It functions in the pathway amino-acid biosynthesis; L-arginine biosynthesis; L-arginine from L-ornithine and carbamoyl phosphate: step 1/3. Its function is as follows. Reversibly catalyzes the transfer of the carbamoyl group from carbamoyl phosphate (CP) to the N(epsilon) atom of ornithine (ORN) to produce L-citrulline. The polypeptide is Ornithine carbamoyltransferase (Hydrogenovibrio crunogenus (strain DSM 25203 / XCL-2) (Thiomicrospira crunogena)).